We begin with the raw amino-acid sequence, 309 residues long: 2-phosphoglycerate kinase (309 aa).

Residues 5–92 (NDIIVRGKSY…LWRMVLGRRP (88 aa)) enclose the ATP-cone domain.

This sequence belongs to the 2-phosphoglycerate kinase family. A divalent metal cation is required as a cofactor.

It carries out the reaction (2R)-2-phosphoglycerate + ATP = (2R)-2,3-bisphosphoglycerate + ADP + H(+). Its pathway is thermoadapter biosynthesis; cyclic 2,3-diphosphoglycerate biosynthesis; cyclic 2,3-diphosphoglycerate from 2-phospho-D-glycerate: step 1/2. In terms of biological role, catalyzes the phosphorylation of 2-phosphoglycerate to 2,3-diphosphoglycerate. Involved in the biosynthesis of cyclic 2,3-bisphosphoglycerate, a thermoprotectant. The sequence is that of 2-phosphoglycerate kinase from Methanocaldococcus jannaschii (strain ATCC 43067 / DSM 2661 / JAL-1 / JCM 10045 / NBRC 100440) (Methanococcus jannaschii).